We begin with the raw amino-acid sequence, 526 residues long: ATP-dependent RNA helicase DBP3 (526 aa).

Positions 1 to 33 (MVEEHKNKKRRQEDGPADVPEKKVKVSKSEKKD) are enriched in basic and acidic residues. A disordered region spans residues 1 to 86 (MVEEHKNKKR…SSQGYTQSES (86 aa)). Basic residues predominate over residues 34–65 (KKEKKEKKEKKEKKEKKEKKEKKEKKEKKKKY). Residues 69 to 86 (ATISGSAQSSQGYTQSES) are compositionally biased toward polar residues. The Q motif motif lies at 118 to 144 (LSFDQIQLNSKISAVVNKFPTPTPIQS). The Helicase ATP-binding domain occupies 147–318 (WPYLLSGKDV…STFMNQPVKV (172 aa)). 160 to 167 (AETGSGKT) contributes to the ATP binding site. Positions 265–268 (DEAD) match the DEAD box motif. In terms of domain architecture, Helicase C-terminal spans 334 to 496 (QIVEVIEPFD…PVPDELLKFG (163 aa)).

It belongs to the DEAD box helicase family. DDX5/DBP2 subfamily.

Its subcellular location is the nucleus. It is found in the nucleolus. The enzyme catalyses ATP + H2O = ADP + phosphate + H(+). Its function is as follows. ATP-dependent RNA helicase required for 60S ribosomal subunit synthesis. Involved in efficient pre-rRNA processing, predominantly at site A3, which is necessary for the normal formation of 25S and 5.8S rRNAs. The polypeptide is ATP-dependent RNA helicase DBP3 (DBP3) (Scheffersomyces stipitis (strain ATCC 58785 / CBS 6054 / NBRC 10063 / NRRL Y-11545) (Yeast)).